Reading from the N-terminus, the 454-residue chain is uncharacterized protein (454 aa).

Residues 422–454 (EWLPPAHLDHGQPRTNSYFHPEKLLHDSDEDDP) form a disordered region.

It belongs to the Rv1128c/1148c/1588c/1702c/1945/3466 family.

This is an uncharacterized protein from Mycobacterium tuberculosis (strain CDC 1551 / Oshkosh).